The primary structure comprises 61 residues: Large ribosomal subunit protein uL29 (61 aa).

Belongs to the universal ribosomal protein uL29 family.

This chain is Large ribosomal subunit protein uL29, found in Nitratidesulfovibrio vulgaris (strain DSM 19637 / Miyazaki F) (Desulfovibrio vulgaris).